The primary structure comprises 372 residues: E3 ubiquitin-protein ligase RNF34 (372 aa).

Residues 56 to 107 (EGPNIVCKACGLSFSVFRKKHVCCDCKKDFCSVCSVLQENLRRCSTCHLLQE) form an FYVE-type zinc finger. The SAP 1 domain occupies 115–134 (LMRLKVKDLRQYLILRNIPT). Residue Ser169 is modified to Phosphoserine. A disordered region spans residues 194–252 (QGELMDGDQTSRSGVPAQVQSEITSANTEDDDDDDDEDDDDEEENAEDQNPGLSKERVR). A compositionally biased stretch (polar residues) spans 201-220 (DQTSRSGVPAQVQSEITSAN). Residues 221-240 (TEDDDDDDDEDDDDEEENAE) show a composition bias toward acidic residues. Residues Ser254 and Ser256 each carry the phosphoserine modification. Residues 264-278 (VEGMSVRQLKEILAR) form the SAP 2 domain. The segment at 325-360 (CRICMDAVIDCVLLECGHMVTCTKCGKRMSECPICR) adopts an RING-type zinc-finger fold.

As to quaternary structure, interacts with CASP8 and CASP10. Interacts with p53/TP53; involved in p53/TP53 ubiquitination. Interacts (via RING-type zinc finger) with MDM2; the interaction stabilizes MDM2. Interacts (via RING-type zinc finger) with PPARGC1A. Interacts with NOD1. Post-translationally, autoubiquitinated (in vitro). In terms of processing, proteolytically cleaved by caspases upon induction of apoptosis by TNF.

The protein resides in the cell membrane. Its subcellular location is the endomembrane system. It is found in the nucleus. The protein localises to the nucleus speckle. It localises to the cytoplasm. The protein resides in the cytosol. The catalysed reaction is S-ubiquitinyl-[E2 ubiquitin-conjugating enzyme]-L-cysteine + [acceptor protein]-L-lysine = [E2 ubiquitin-conjugating enzyme]-L-cysteine + N(6)-ubiquitinyl-[acceptor protein]-L-lysine.. It functions in the pathway protein modification; protein ubiquitination. Its function is as follows. E3 ubiquitin-protein ligase that regulates several biological processes through the ubiquitin-mediated proteasomal degradation of various target proteins. Ubiquitinates the caspases CASP8 and CASP10, promoting their proteasomal degradation, to negatively regulate cell death downstream of death domain receptors in the extrinsic pathway of apoptosis. May mediate 'Lys-48'-linked polyubiquitination of RIPK1 and its subsequent proteasomal degradation thereby indirectly regulating the tumor necrosis factor-mediated signaling pathway. Negatively regulates p53/TP53 through its direct ubiquitination and targeting to proteasomal degradation. Indirectly, may also negatively regulate p53/TP53 through ubiquitination and degradation of SFN. Mediates PPARGC1A proteasomal degradation probably through ubiquitination thereby indirectly regulating the metabolism of brown fat cells. Possibly involved in innate immunity, through 'Lys-48'-linked polyubiquitination of NOD1 and its subsequent proteasomal degradation. The sequence is that of E3 ubiquitin-protein ligase RNF34 (RNF34) from Pongo abelii (Sumatran orangutan).